A 508-amino-acid chain; its full sequence is UDP-N-acetylmuramoylalanine--D-glutamate ligase (508 aa).

G138–T144 is a binding site for ATP.

This sequence belongs to the MurCDEF family.

The protein resides in the cytoplasm. The enzyme catalyses UDP-N-acetyl-alpha-D-muramoyl-L-alanine + D-glutamate + ATP = UDP-N-acetyl-alpha-D-muramoyl-L-alanyl-D-glutamate + ADP + phosphate + H(+). It participates in cell wall biogenesis; peptidoglycan biosynthesis. Functionally, cell wall formation. Catalyzes the addition of glutamate to the nucleotide precursor UDP-N-acetylmuramoyl-L-alanine (UMA). The sequence is that of UDP-N-acetylmuramoylalanine--D-glutamate ligase from Bordetella avium (strain 197N).